The primary structure comprises 1272 residues: RING finger protein PFE0100w (1272 aa).

The segment at isoleucine 216–asparagine 260 is disordered. The span at lysine 234–asparagine 260 shows a compositional bias: low complexity. One copy of the CHCR repeat lies at tyrosine 608 to glutamine 752. A helical transmembrane segment spans residues isoleucine 771–leucine 791. 2 disordered regions span residues asparagine 842–glutamine 862 and glutamate 908–lysine 970. 2 stretches are compositionally biased toward low complexity: residues serine 850–serine 861 and asparagine 909–asparagine 956. A compositionally biased stretch (polar residues) spans lysine 957–isoleucine 967. The stretch at methionine 1146–tyrosine 1182 forms a coiled coil. The RING-type; atypical zinc finger occupies cysteine 1189 to histidine 1224.

It is found in the membrane. The chain is RING finger protein PFE0100w from Plasmodium falciparum (isolate 3D7).